The chain runs to 247 residues: Large ribosomal subunit protein uL30 (247 aa).

N-acetylmethionine is present on Met1. 4 repeat units span residues 7-17, 18-29, 30-41, and 42-53. A 4 X 12 AA tandem repeats region spans residues 7-53; the sequence is KKKVPAVPETLKKKRRNFAELKIKRLRKKFAQKMLRKARRKLIYEKA. At Thr16 the chain carries Phosphothreonine. The residue at position 123 (Lys123) is an N6-acetyllysine. Lys126 carries the post-translational modification N6-succinyllysine. Phosphotyrosine is present on Tyr138.

The protein belongs to the universal ribosomal protein uL30 family. As to quaternary structure, component of the large ribosomal subunit. Homodimer. Interacts with DHX33.

It is found in the cytoplasm. Its function is as follows. Component of the large ribosomal subunit. The ribosome is a large ribonucleoprotein complex responsible for the synthesis of proteins in the cell. Binds to G-rich structures in 28S rRNA and in mRNAs. Plays a regulatory role in the translation apparatus; inhibits cell-free translation of mRNAs. This Pongo abelii (Sumatran orangutan) protein is Large ribosomal subunit protein uL30 (RPL7).